Here is a 555-residue protein sequence, read N- to C-terminus: Ribonuclease J2 (555 aa).

Zn(2+) contacts are provided by His74, His76, His142, and Asp164. 364 to 368 (HVSGH) lines the substrate pocket.

The protein belongs to the metallo-beta-lactamase superfamily. RNA-metabolizing metallo-beta-lactamase-like family. Bacterial RNase J subfamily. Unclear whether it forms homodimers or belongs to a larger complex. According to probably does not form homodimers, while shows homodimer formation. Both reports show RNase J1 and J2 interaction, probably as a heterotetramer shows it is a component of a possible RNA degradosome complex composed of rny, rnjA, rnjB, pnp, pfkA and eno, while finds no evidence of an RNA degradosome complex. It depends on Zn(2+) as a cofactor.

It localises to the cytoplasm. Endonucleolytically cleaves the 5'-leader sequence of certain mRNAs. Endonuclease digestion by the RNase J1/J2 complex occurs at a different site and in some cases more efficiently than J1 or J2 alone. The exonuclease activity of the J1/J2 complex is highly processive on substrates longer than 5 nucleotides, on shorter substrates is distributive. Plays a role in mRNA maturation and stability. Appears to have a limited effect on 16S rRNA maturation, despite its similarity to RNase J1. This subunit alone has very poor 5'-3' exonuclease activity. This is Ribonuclease J2 from Bacillus subtilis (strain 168).